A 1946-amino-acid polypeptide reads, in one-letter code: Integrin beta-like protein E (1946 aa).

Residues 1–22 form the signal peptide; that stretch reads MNNLFKFLFVLLAIFCPPISDL. Residues 23-1875 are Extracellular-facing; it reads VVSHGVPQQH…ATTQTTNNKT (1853 aa). N-linked (GlcNAc...) asparagine glycans are attached at residues asparagine 107, asparagine 134, and asparagine 203. Residues 423–460 form the EGF-like domain; it reads YGQNCDPTPPCDKGIPNEGILGDGKCMCINGYSGDKCD. Cystine bridges form between cysteine 433-cysteine 448 and cysteine 450-cysteine 459. Residues 514–699 form the VWFA domain; the sequence is DVFVLVDVNV…AGLKSVLSNV (186 aa). Asparagine 705, asparagine 860, asparagine 1043, asparagine 1113, asparagine 1177, asparagine 1374, asparagine 1401, asparagine 1513, asparagine 1611, asparagine 1620, asparagine 1662, asparagine 1671, asparagine 1737, asparagine 1743, asparagine 1762, asparagine 1812, asparagine 1852, and asparagine 1873 each carry an N-linked (GlcNAc...) asparagine glycan. The chain crosses the membrane as a helical span at residues 1876–1896; that stretch reads VLTGAIAGAAAGTALIAAAAW. Topologically, residues 1897 to 1946 are cytoplasmic; it reads KLLRKAAPPTDTFFSEAAFLGDGVNANPLYEQSASAAENPLYQSASDNTD.

This sequence belongs to the SIB family. As to quaternary structure, interacts with talA/talin.

It localises to the membrane. Its function is as follows. Implicated in cellular adhesion. This chain is Integrin beta-like protein E (sibE), found in Dictyostelium discoideum (Social amoeba).